The primary structure comprises 228 residues: uncharacterized protein (228 aa).

S-adenosyl-L-methionine contacts are provided by residues 77–79, G113, V133, and 140–142; these read TTA and PSL.

It belongs to the class IV-like SAM-binding methyltransferase superfamily. RNA methyltransferase TrmH family.

This is an uncharacterized protein from Escherichia coli (strain K12).